Here is a 160-residue protein sequence, read N- to C-terminus: Sulfur-rich protein (160 aa).

Transmembrane regions (helical) follow at residues 62–82 (ITMV…TFVL) and 91–111 (FLFL…SVFM).

The protein resides in the membrane. This is Sulfur-rich protein (srp) from Chlamydia caviae (strain ATCC VR-813 / DSM 19441 / 03DC25 / GPIC) (Chlamydophila caviae).